The following is a 496-amino-acid chain: N-acetylmuramoyl-L-alanine amidase LytC (496 aa).

Positions 1–24 (MRSYIKVLTMCFLGLILFVPTALA) are cleaved as a signal peptide. Repeat copies occupy residues 30–128 (RVGG…ISIK), 129–222 (RIAG…PSPT), and 223–318 (RISG…NPVV). Residues 30 to 318 (RVGGSNRYGT…VANQLKNPVV (289 aa)) are 3 X tandem repeats. Residues 322 to 490 (IFIDPGHGDQ…DKAAQAIHDG (169 aa)) enclose the MurNAc-LAA domain.

Belongs to the N-acetylmuramoyl-L-alanine amidase 3 family.

It localises to the secreted. The protein localises to the cell wall. The catalysed reaction is Hydrolyzes the link between N-acetylmuramoyl residues and L-amino acid residues in certain cell-wall glycopeptides.. In terms of biological role, autolysins are cell wall hydrolases involved in some important biological processes such as cell separation, cell-wall turnover, competence for genetic transformation, formation of the flagella - in particular of its basal body - and sporulation. Has a high affinity for teichoic acid-endowed peptidoglycan. LytC is required for efficient swarming motility but not at the level of cell separation or flagellum biosynthesis. Rather, LytC appears to be important for proper flagellar function. The polypeptide is N-acetylmuramoyl-L-alanine amidase LytC (lytC) (Bacillus subtilis (strain 168)).